The primary structure comprises 60 residues: Cytotoxin 1 (60 aa).

Intrachain disulfides connect cysteine 3/cysteine 21, cysteine 14/cysteine 38, cysteine 42/cysteine 53, and cysteine 54/cysteine 59.

The protein belongs to the three-finger toxin family. Short-chain subfamily. Type IA cytotoxin sub-subfamily. In terms of assembly, monomer, or heterodimer with alpha-cobratoxin (AC P01391); disulfide-linked. As to expression, expressed by the venom gland.

Its subcellular location is the secreted. It localises to the target cell membrane. Functionally, monomer: shows cytolytic activity (apoptosis is induced in C2C12 cells, but no cytotoxicity is observed on INS-1E). In addition, this toxin shows insulinotropic activity that may be mediated by the modulation of potassium channels (Kv). It induces the increase of intracellular calcium release. It induces insulin secretion from rat INS-1E cells in absence and in presence of glucose, without affecting cell viability and integrity. In presence of glucose, the insulinotropic activity is increased, suggesting a possible synergistic effect with glucose. Its insulinotropic activity does not involve GLP-1R signaling. Heterodimer: has no cytolytic activity, but retains most of the alpha-cobratoxin capacity to compete with alpha-bungarotoxin for binding to Torpedo and alpha-7/CHRNA7 nicotinic acetylcholine receptors (nAChRs) as well as to Lymnea stagnalis acetylcholine-binding protein. This Naja kaouthia (Monocled cobra) protein is Cytotoxin 1.